The following is a 475-amino-acid chain: Early growth response protein 1-B (475 aa).

2 disordered regions span residues 109–180 and 264–285; these read NVSS…TASI and PSRM…RPYA. Low complexity predominate over residues 111-140; sequence SSSSAPSSSPSSSSSSSSSSSSQSPPLSCS. Positions 170 to 179 are enriched in polar residues; it reads QPFQNASTAS. 3 C2H2-type zinc fingers span residues 284–308, 314–336, and 342–364; these read YACP…IRIH, FQCR…IRTH, and FACD…TKIH. The interval 355–379 is disordered; sequence DERKRHTKIHLRQKDKKADKATPVS. Basic residues predominate over residues 359-369; sequence RHTKIHLRQKD.

It belongs to the EGR C2H2-type zinc-finger protein family.

Its subcellular location is the nucleus. It localises to the cytoplasm. Functionally, transcriptional regulator. Recognizes and binds to the DNA sequence 5'-GCG(T/G)GGGCG-3'(EGR-site) in the promoter region of target genes. Binds double-stranded target DNA, irrespective of the cytosine methylation status. Regulates the transcription of numerous target genes, and thereby plays an important role in regulating the response to growth factors, DNA damage, and ischemia. Plays a role in the regulation of cell survival, proliferation and cell death. Mediates responses to ischemia and hypoxia; regulates the expression of proteins that are involved in inflammatory processes. Plays a role in regulating the expression of circadian clock genes. This Xenopus laevis (African clawed frog) protein is Early growth response protein 1-B (egr1-b).